The chain runs to 291 residues: Pyridoxal 5'-phosphate synthase subunit PdxS (291 aa).

Residue Asp23 coordinates D-ribose 5-phosphate. The active-site Schiff-base intermediate with D-ribose 5-phosphate is the Lys80. Residue Gly152 participates in D-ribose 5-phosphate binding. Arg164 provides a ligand contact to D-glyceraldehyde 3-phosphate. D-ribose 5-phosphate-binding positions include Gly213 and 234–235; that span reads GS.

This sequence belongs to the PdxS/SNZ family. As to quaternary structure, in the presence of PdxT, forms a dodecamer of heterodimers.

It carries out the reaction aldehydo-D-ribose 5-phosphate + D-glyceraldehyde 3-phosphate + L-glutamine = pyridoxal 5'-phosphate + L-glutamate + phosphate + 3 H2O + H(+). It functions in the pathway cofactor biosynthesis; pyridoxal 5'-phosphate biosynthesis. In terms of biological role, catalyzes the formation of pyridoxal 5'-phosphate from ribose 5-phosphate (RBP), glyceraldehyde 3-phosphate (G3P) and ammonia. The ammonia is provided by the PdxT subunit. Can also use ribulose 5-phosphate and dihydroxyacetone phosphate as substrates, resulting from enzyme-catalyzed isomerization of RBP and G3P, respectively. This is Pyridoxal 5'-phosphate synthase subunit PdxS from Bifidobacterium adolescentis (strain ATCC 15703 / DSM 20083 / NCTC 11814 / E194a).